Reading from the N-terminus, the 190-residue chain is Nucleoside triphosphate pyrophosphatase (190 aa).

Aspartate 69 serves as the catalytic Proton acceptor.

This sequence belongs to the Maf family. A divalent metal cation is required as a cofactor.

The protein resides in the cytoplasm. The catalysed reaction is a ribonucleoside 5'-triphosphate + H2O = a ribonucleoside 5'-phosphate + diphosphate + H(+). It carries out the reaction a 2'-deoxyribonucleoside 5'-triphosphate + H2O = a 2'-deoxyribonucleoside 5'-phosphate + diphosphate + H(+). Its function is as follows. Nucleoside triphosphate pyrophosphatase. May have a dual role in cell division arrest and in preventing the incorporation of modified nucleotides into cellular nucleic acids. In Helicobacter pylori (strain G27), this protein is Nucleoside triphosphate pyrophosphatase.